Here is a 176-residue protein sequence, read N- to C-terminus: Deoxyuridine 5'-triphosphate nucleotidohydrolase (176 aa).

Substrate-binding positions include R67–G69, N80, T84–D86, and K94. A disordered region spans residues G141–Q176.

The protein belongs to the dUTPase family. Mg(2+) serves as cofactor.

The catalysed reaction is dUTP + H2O = dUMP + diphosphate + H(+). It participates in pyrimidine metabolism; dUMP biosynthesis; dUMP from dCTP (dUTP route): step 2/2. Its function is as follows. This enzyme is involved in nucleotide metabolism: it produces dUMP, the immediate precursor of thymidine nucleotides and it decreases the intracellular concentration of dUTP so that uracil cannot be incorporated into DNA. The protein is Deoxyuridine 5'-triphosphate nucleotidohydrolase of Streptomyces griseus subsp. griseus (strain JCM 4626 / CBS 651.72 / NBRC 13350 / KCC S-0626 / ISP 5235).